The sequence spans 159 residues: UPF0262 protein RD1_1069 (159 aa).

Belongs to the UPF0262 family.

This is UPF0262 protein RD1_1069 from Roseobacter denitrificans (strain ATCC 33942 / OCh 114) (Erythrobacter sp. (strain OCh 114)).